A 662-amino-acid polypeptide reads, in one-letter code: UvrABC system protein B (662 aa).

Residues 25-414 form the Helicase ATP-binding domain; sequence TGLNSKKRSQ…GTVVELIIRP (390 aa). Residue 38–45 participates in ATP binding; that stretch reads GITGSGKT. A Beta-hairpin motif is present at residues 91–114; sequence YYDYYQPESYIVRTDTFIEKDSSI. The region spanning 430 to 592 is the Helicase C-terminal domain; sequence QVEDLISEIQ…IIPKTINRAI (163 aa). One can recognise a UVR domain in the interval 622-657; it reads KAHMDKLKKEMFKAASNLEFEQAAKLRNQLKALEEA.

This sequence belongs to the UvrB family. As to quaternary structure, forms a heterotetramer with UvrA during the search for lesions. Interacts with UvrC in an incision complex.

It is found in the cytoplasm. In terms of biological role, the UvrABC repair system catalyzes the recognition and processing of DNA lesions. A damage recognition complex composed of 2 UvrA and 2 UvrB subunits scans DNA for abnormalities. Upon binding of the UvrA(2)B(2) complex to a putative damaged site, the DNA wraps around one UvrB monomer. DNA wrap is dependent on ATP binding by UvrB and probably causes local melting of the DNA helix, facilitating insertion of UvrB beta-hairpin between the DNA strands. Then UvrB probes one DNA strand for the presence of a lesion. If a lesion is found the UvrA subunits dissociate and the UvrB-DNA preincision complex is formed. This complex is subsequently bound by UvrC and the second UvrB is released. If no lesion is found, the DNA wraps around the other UvrB subunit that will check the other stand for damage. This chain is UvrABC system protein B, found in Rickettsia prowazekii (strain Madrid E).